We begin with the raw amino-acid sequence, 157 residues long: Protein MG115 (157 aa).

Belongs to the CinA family.

The chain is Protein MG115 from Mycoplasma genitalium (strain ATCC 33530 / DSM 19775 / NCTC 10195 / G37) (Mycoplasmoides genitalium).